Here is a 792-residue protein sequence, read N- to C-terminus: Phenylalanine--tRNA ligase beta subunit (792 aa).

The 117-residue stretch at 40-156 folds into the tRNA-binding domain; that stretch reads FPRTENLIVG…AKLNDIDPLK (117 aa). A B5 domain is found at 404 to 472; that stretch reads LKDNLIDFDS…KKINVNNLEL (69 aa). Residues D450, D456, E459, and E460 each coordinate Mg(2+).

Belongs to the phenylalanyl-tRNA synthetase beta subunit family. Type 1 subfamily. In terms of assembly, tetramer of two alpha and two beta subunits. Mg(2+) is required as a cofactor.

The protein localises to the cytoplasm. It carries out the reaction tRNA(Phe) + L-phenylalanine + ATP = L-phenylalanyl-tRNA(Phe) + AMP + diphosphate + H(+). In Malacoplasma penetrans (strain HF-2) (Mycoplasma penetrans), this protein is Phenylalanine--tRNA ligase beta subunit.